The sequence spans 617 residues: 1-deoxy-D-xylulose-5-phosphate synthase (617 aa).

Residues H77 and 118-120 each bind thiamine diphosphate; that span reads GHS. Position 149 (D149) interacts with Mg(2+). Residues 150–151, N178, Y286, and E367 each bind thiamine diphosphate; that span reads GA. N178 contributes to the Mg(2+) binding site.

This sequence belongs to the transketolase family. DXPS subfamily. As to quaternary structure, homodimer. Requires Mg(2+) as cofactor. The cofactor is thiamine diphosphate.

The enzyme catalyses D-glyceraldehyde 3-phosphate + pyruvate + H(+) = 1-deoxy-D-xylulose 5-phosphate + CO2. It participates in metabolic intermediate biosynthesis; 1-deoxy-D-xylulose 5-phosphate biosynthesis; 1-deoxy-D-xylulose 5-phosphate from D-glyceraldehyde 3-phosphate and pyruvate: step 1/1. Functionally, catalyzes the acyloin condensation reaction between C atoms 2 and 3 of pyruvate and glyceraldehyde 3-phosphate to yield 1-deoxy-D-xylulose-5-phosphate (DXP). The protein is 1-deoxy-D-xylulose-5-phosphate synthase of Actinobacillus pleuropneumoniae serotype 5b (strain L20).